A 457-amino-acid chain; its full sequence is Hydrogenobyrinate a,c-diamide synthase (457 aa).

In terms of domain architecture, GATase cobBQ-type spans 255-441; that stretch reads TVAIAAGRAF…LHTHPAATPG (187 aa). Cysteine 337 serves as the catalytic Nucleophile.

It belongs to the CobB/CbiA family. Requires Mg(2+) as cofactor.

The catalysed reaction is hydrogenobyrinate + 2 L-glutamine + 2 ATP + 2 H2O = hydrogenobyrinate a,c-diamide + 2 L-glutamate + 2 ADP + 2 phosphate + 2 H(+). It functions in the pathway cofactor biosynthesis; adenosylcobalamin biosynthesis; cob(II)yrinate a,c-diamide from precorrin-2 (aerobic route): step 9/10. Functionally, catalyzes the ATP-dependent amidation of the two carboxylate groups at positions a and c of hydrogenobyrinate, using either L-glutamine or ammonia as the nitrogen source. The protein is Hydrogenobyrinate a,c-diamide synthase of Mycobacterium bovis (strain ATCC BAA-935 / AF2122/97).